Here is a 416-residue protein sequence, read N- to C-terminus: Acyl-coenzyme A amino acid N-acyltransferase 1 (416 aa).

Ser-125 is subject to Phosphoserine. Residues Ser-235, Asp-325, and His-359 each act as charge relay system in the active site. Ser-414 is subject to Phosphoserine. A Microbody targeting signal motif is present at residues 414–416 (SKL).

Belongs to the C/M/P thioester hydrolase family. Expressed mainly in liver and kidney with low levels in adrenal and little or no expression in other tissues.

It localises to the peroxisome. The catalysed reaction is tetracosanoyl-CoA + taurine = N-tetracosanoyl-taurine + CoA + H(+). The enzyme catalyses eicosanoyl-CoA + taurine = N-eicosanoyl-taurine + CoA + H(+). It carries out the reaction taurine + octadecanoyl-CoA = N-octadecanoyl-taurine + CoA + H(+). It catalyses the reaction taurine + hexadecanoyl-CoA = N-hexadecanoyl-taurine + CoA + H(+). The catalysed reaction is tetradecanoyl-CoA + taurine = N-tetradecanoyl-taurine + CoA + H(+). The enzyme catalyses dodecanoyl-CoA + taurine = N-dodecanoyl-taurine + CoA + H(+). Its function is as follows. Acyltransferase which efficiently conjugates very long-chain and long-chain fatty acids to taurine. Shows no conjugation activity in the presence of glycine. This chain is Acyl-coenzyme A amino acid N-acyltransferase 1, found in Mus musculus (Mouse).